The chain runs to 517 residues: Ribosome assembly protein 4 (517 aa).

The interval 1-25 (MATLAPPPSKRQRREEIQRTQTQQD) is disordered. Positions 34-128 (LGSFKANFID…TITLSAEPQA (95 aa)) are ubiquitin-like (UBL) domain. WD repeat units lie at residues 144 to 184 (GHGQ…PKFT), 187 to 226 (GHTG…QVNQ), 230 to 277 (GHAK…HVLS), 278 to 316 (GHKG…LVHN), 351 to 397 (EERR…SKPV), 402 to 441 (GHQN…FIKN), 444 to 483 (GHVA…LAMD), and 486 to 517 (GHED…TWRN).

This sequence belongs to the NLE1/RSA4 family. In terms of assembly, associates with the pre-60S ribosomal particle. Interacts (via WD repeats) with uL18. Interacts (via UBL domain) with MDN1 (via VWFA/MIDAS domain). Interacts (via WD repeats) with NSA2.

It is found in the nucleus. The protein resides in the nucleolus. Its function is as follows. Involved in ribosome biogenesis. Required for processing and efficient intra-nuclear transport of pre-60S ribosomal subunits. Interacts with the AAA-ATPase Midasin, which is essential for the ATP-dependent dissociation of a group of nonribosomal factors from the pre-60S particle. The chain is Ribosome assembly protein 4 from Chaetomium thermophilum (strain DSM 1495 / CBS 144.50 / IMI 039719) (Thermochaetoides thermophila).